The primary structure comprises 345 residues: Very-long-chain 3-oxoacyl-CoA reductase (345 aa).

A helical transmembrane segment spans residues 26–46 (GAAVLLATGGLFLASRVLTFV). NADP(+) contacts are provided by Val-71, Asp-125, Asp-133, Asn-152, Tyr-219, Lys-223, Ile-252, and Ser-254. Residue Tyr-219 is the Proton donor of the active site. The active-site Lowers pKa of active site Tyr is Lys-223.

This sequence belongs to the short-chain dehydrogenases/reductases (SDR) family.

The protein localises to the endoplasmic reticulum membrane. It carries out the reaction a very-long-chain (3R)-3-hydroxyacyl-CoA + NADP(+) = a very-long-chain 3-oxoacyl-CoA + NADPH + H(+). The protein operates within lipid metabolism; fatty acid biosynthesis. Functionally, component of the microsomal membrane bound fatty acid elongation system, which produces the 26-carbon very long-chain fatty acids (VLCFA) from palmitate. Catalyzes the reduction of the 3-ketoacyl-CoA intermediate that is formed in each cycle of fatty acid elongation. VLCFAs serve as precursors for ceramide and sphingolipids. In Aspergillus clavatus (strain ATCC 1007 / CBS 513.65 / DSM 816 / NCTC 3887 / NRRL 1 / QM 1276 / 107), this protein is Very-long-chain 3-oxoacyl-CoA reductase.